The chain runs to 676 residues: Potassium voltage-gated channel subfamily KQT member 1 (676 aa).

Disordered stretches follow at residues 1–28 (MAAASSPPRAERKRWGWGRLPGARRGSA) and 62–84 (APPASPAAPAAPPVASDLGPRPP). The Cytoplasmic segment spans residues 1-120 (MAAASSPPRA…YNFLERPTGW (120 aa)). Serine 27 carries the phosphoserine; by PKA modification. Residues 62–73 (APPASPAAPAAP) are compositionally biased toward pro residues. A helical membrane pass occupies residues 121 to 142 (KCFVYHFAVFLIVLVCLIFSVL). At 143-153 (STIEQYAALAT) the chain is on the extracellular side. The helical transmembrane segment at 154–176 (GTLFWMEIVLVVFFGTEYVVRLW) threads the bilayer. The Cytoplasmic segment spans residues 177-192 (SAGCRSKYVGLWGRLR). A helical membrane pass occupies residues 193 to 218 (FARKPISIIDLIVVVASMVVLCVGSK). Over 219 to 226 (GQVFATSA) the chain is Extracellular. Residues 227–242 (IRGIRFLQILRMLHVD) form a helical; Voltage-sensor membrane-spanning segment. Residues 238 to 246 (MLHVDRQGG) are interaction with KCNE3. At 243 to 260 (RQGGTWRLLGSVVFIHRQ) the chain is on the cytoplasmic side. An a 1,2-diacyl-sn-glycero-3-phospho-(1D-myo-inositol-4,5-bisphosphate)-binding site is contributed by glutamine 244. The chain crosses the membrane as a helical span at residues 261–283 (ELITTLYIGFLGLIFSSYFVYLA). Topologically, residues 284–299 (EKDAVNESGRVEFGSY) are extracellular. N-linked (GlcNAc...) asparagine glycosylation occurs at asparagine 289. Positions 300 to 320 (ADALWWGVVTVTTIGYGDKVP) form an intramembrane region, pore-forming. Over 321–322 (QT) the chain is Extracellular. A helical membrane pass occupies residues 323–348 (WVGKTIASCFSVFAISFFALPAGILG). Residues 349–676 (SGFALKVQQK…VPRRGPDEGS (328 aa)) lie on the Cytoplasmic side of the membrane. Positions 370–382 (AAASLIQTAWRCY) are interaction with CALM. A phosphoserine mark is found at serine 407 and serine 409. The interval 515-529 (KVIRRMQYFVAKKKF) is interaction with CALM; calcium-dependent. The interval 535–572 (PYDVRDVIEQYSQGHLNLMVRIKELQRRLDQSIGKPSL) is interaction with KCNE1 C-terminus. A coiled-coil region spans residues 585–621 (SNTIGARLNRVEDKVTQLDQRLALITDMLHQLLSLHG). An interaction with AKAP9 region spans residues 588–616 (IGARLNRVEDKVTQLDQRLALITDMLHQL). The segment at 589 to 620 (GARLNRVEDKVTQLDQRLALITDMLHQLLSLH) is C-terminal assembly domain (tetramerization). The interval 620–676 (HGGSTPGSGGPPREGGAHITQPCGSGGSVDPELFLPSNTLPTYEQLTVPRRGPDEGS) is disordered. Residues 623–632 (STPGSGGPPR) show a composition bias toward gly residues. A compositionally biased stretch (polar residues) spans 655 to 664 (PSNTLPTYEQ).

Belongs to the potassium channel family. KQT (TC 1.A.1.15) subfamily. Kv7.1/KCNQ1 sub-subfamily. In terms of assembly, tetramer. Heterotetramer with KCNE1; targets to the membrane raft. Interacts (via C-terminus) with calmodulin; forms a heterooctameric structure (with 4:4 KCNQ1:CALM stoichiometry); the interaction is calcium-independent, constitutive, participates in the proper assembly of a functional channel and also acts a calcium sensor. KCNQ1 channels interact more strongly with Ca(2+)-CALM than with apoCALM. Interacts with AKAP9; targets protein kinase A (PKA) catalytic and regulatory subunits and protein phosphatase 1 (PP1) to the KCNQ1-KCNE1 complex, allowing PKA-mediated phosphorylation and increase of delayed rectifier potassium channel activity. Interacts with KCNE2; forms a heterooligomer complex that targets to the membrane raft and leading to currents with an apparently instantaneous activation, a rapid deactivation process and a linear current-voltage relationship and decreases the amplitude of the outward current. Interacts with AP2M1; mediates estrogen-induced internalization via clathrin-coated vesicles. Interacts with NEDD4L; promotes internalization and decreases I(Ks) currents. Interacts with USP2; counteracts the NEDD4L-specific down-regulation of I(Ks) and restore plasma membrane localization. Heterotetramer with KCNQ5; has a voltage-gated potassium channel activity. Interacts with KCNE3; four KCNE3 molecules are bound to one KCNQ1 tetramer (4:4 KCNQ1:KCNE3 stoichiometry); alters membrane raft localization; affects KCNQ1 structure and gating properties. Interacts with KCNE4; impairs KCNQ1 localization in lipid rafts and inhibits voltage-gated potassium channel activity. Interacts with KCNE5; impairs KCNQ1 localization in lipid rafts and only conducts current upon strong and continued depolarization. Interacts with SLC5A3; forms coregulatory channel-transporter complexes that modulate Na(+)-coupled myo-inositol influx through the transporter. In terms of processing, phosphorylation at Ser-27 by PKA; increases delayed rectifier potassium channel activity of the KCNQ1-KCNE1 complex through a macromolecular complex that includes PKA, PP1, and the targeting protein AKAP9. Ubiquitinated by NEDD4L; promotes internalization. The ubiquitinylated form is internalized through a clathrin-mediated endocytosis by interacting with AP2M1 and is recycled back to the cell membrane via RAB4A and RAB11A. Post-translationally, deubiquitinated by USP2; counteracts the NEDD4L-specific down-regulation of I(Ks) and restores the membrane localization. Abundantly expressed in heart, pancreas, prostate, kidney, small intestine and peripheral blood leukocytes. Less abundant in placenta, lung, spleen, colon, thymus, testis and ovaries.

The protein localises to the cell membrane. It localises to the cytoplasmic vesicle membrane. The protein resides in the early endosome. It is found in the membrane raft. Its subcellular location is the endoplasmic reticulum. The protein localises to the basolateral cell membrane. It localises to the apical cell membrane. The enzyme catalyses K(+)(in) = K(+)(out). With respect to regulation, PIP2 molecule is essential to activate KCNQ channels by inducing the coupling of the voltage-sensing domain (VSD) and the pore-forming domain (PD). Upon channel activation, PIP2 disrupts the VSD-calmodulin/CALM interactions, causing the release of CALM from the VSD which triggers the opening of the gate. Calcium potentiates KCNQ1 channel current through calcium-bound CALM. Calcium-bound CALM competes with PIP2 to stabilize the channel open state. Pore-forming subunit of the voltage-gated potassium (Kv) channel involved in the regulation of cardiomyocyte excitability and important in normal development and functions of myocardium, inner ear, stomach and colon. Associates with KCNE beta subunits that modulates current kinetics. Induces a voltage-dependent current by rapidly activating and slowly deactivating potassium-selective outward current. Also promotes a delayed voltage activated potassium current showing outward rectification characteristic. During beta-adrenergic receptor stimulation, participates in cardiac repolarization by associating with KCNE1 to form the I(Ks) cardiac potassium current that increases the amplitude and slows down the activation kinetics of outward potassium current I(Ks). Muscarinic agonist oxotremorine-M strongly suppresses KCNQ1/KCNE1 current. When associated with KCNE3, forms the potassium channel that is important for cyclic AMP-stimulated intestinal secretion of chloride ions. This interaction with KCNE3 is reduced by 17beta-estradiol, resulting in the reduction of currents. During conditions of increased substrate load, maintains the driving force for proximal tubular and intestinal sodium ions absorption, gastric acid secretion, and cAMP-induced jejunal chloride ions secretion. Allows the provision of potassium ions to the luminal membrane of the secretory canaliculus in the resting state as well as during stimulated acid secretion. When associated with KCNE2, forms a heterooligomer complex leading to currents with an apparently instantaneous activation, a rapid deactivation process and a linear current-voltage relationship and decreases the amplitude of the outward current. When associated with KCNE4, inhibits voltage-gated potassium channel activity. When associated with KCNE5, this complex only conducts current upon strong and continued depolarization. Also forms a heterotetramer with KCNQ5; has a voltage-gated potassium channel activity. Binds with phosphatidylinositol 4,5-bisphosphate. KCNQ1-KCNE2 channel associates with Na(+)-coupled myo-inositol symporter in the apical membrane of choroid plexus epithelium and regulates the myo-inositol gradient between blood and cerebrospinal fluid with an impact on neuron excitability. In terms of biological role, non-functional alone but modulatory when coexpressed with the full-length isoform 1. This Homo sapiens (Human) protein is Potassium voltage-gated channel subfamily KQT member 1.